Here is a 122-residue protein sequence, read N- to C-terminus: Large ribosomal subunit protein bL19 (122 aa).

It belongs to the bacterial ribosomal protein bL19 family.

Functionally, this protein is located at the 30S-50S ribosomal subunit interface and may play a role in the structure and function of the aminoacyl-tRNA binding site. This chain is Large ribosomal subunit protein bL19, found in Chlamydia felis (strain Fe/C-56) (Chlamydophila felis).